A 289-amino-acid polypeptide reads, in one-letter code: Splicing factor C9orf78 homolog (289 aa).

Disordered regions lie at residues 1-30 (MRIT…VRLK) and 85-111 (RGKD…RRDE). An interaction with SNRNP200 region spans residues 5-58 (GKTFRRRRADSESEEDEQESEEVRLKLEETREVQNLRKRPNGVSAAALLVGEKV). Residues Ser-15 and Ser-17 each carry the phosphoserine modification. At Tyr-147 the chain carries Phosphotyrosine. Positions 232–283 (LNAPIRRNKEEPKARPLRVGDTEKPEPERSPPNRKRPANEKATDDYHYEKFK) are enriched in basic and acidic residues. The tract at residues 232–289 (LNAPIRRNKEEPKARPLRVGDTEKPEPERSPPNRKRPANEKATDDYHYEKFKKMNRRY) is disordered. Position 253 is a phosphothreonine (Thr-253). Ser-261 carries the post-translational modification Phosphoserine.

Belongs to the TLS1 family. Component of the spliceosome. Interacts with SNRNP200; the interaction is direct. Interacts with PRPF8.

It is found in the nucleus. It localises to the chromosome. The protein resides in the centromere. Plays a role in pre-mRNA splicing by promoting usage of the upstream 3'-splice site at alternative NAGNAG splice sites; these are sites featuring alternative acceptor motifs separated by only a few nucleotides. May also modulate exon inclusion events. PPlays a role in spliceosomal remodeling by displacing WBP4 from SNRNP200 and may act to inhibit SNRNP200 helicase activity. Binds U5 snRNA. Required for proper chromosome segregation. Not required for splicing of shelterin components. The sequence is that of Splicing factor C9orf78 homolog from Mus musculus (Mouse).